The sequence spans 263 residues: Small ribosomal subunit protein eS4 (263 aa).

Residues L42–D104 enclose the S4 RNA-binding domain. K230 participates in a covalent cross-link: Glycyl lysine isopeptide (Lys-Gly) (interchain with G-Cter in SUMO2). At K233 the chain carries N6-acetyllysine.

This sequence belongs to the eukaryotic ribosomal protein eS4 family. As to quaternary structure, component of the small ribosomal subunit. Part of the small subunit (SSU) processome, composed of more than 70 proteins and the RNA chaperone small nucleolar RNA (snoRNA) U3. Identified in a IGF2BP1-dependent mRNP granule complex containing untranslated mRNAs.

The protein resides in the cytoplasm. The protein localises to the nucleus. Its subcellular location is the nucleolus. In terms of biological role, component of the small ribosomal subunit. The ribosome is a large ribonucleoprotein complex responsible for the synthesis of proteins in the cell. Part of the small subunit (SSU) processome, first precursor of the small eukaryotic ribosomal subunit. During the assembly of the SSU processome in the nucleolus, many ribosome biogenesis factors, an RNA chaperone and ribosomal proteins associate with the nascent pre-rRNA and work in concert to generate RNA folding, modifications, rearrangements and cleavage as well as targeted degradation of pre-ribosomal RNA by the RNA exosome. The chain is Small ribosomal subunit protein eS4 (RPS4X) from Oryctolagus cuniculus (Rabbit).